The chain runs to 439 residues: Xaa-Pro dipeptidase (439 aa).

Residues D244, D255, H335, E380, and E418 each coordinate Mn(2+).

The protein belongs to the peptidase M24B family. Bacterial-type prolidase subfamily. Requires Mn(2+) as cofactor.

The enzyme catalyses Xaa-L-Pro dipeptide + H2O = an L-alpha-amino acid + L-proline. Functionally, splits dipeptides with a prolyl residue in the C-terminal position. This is Xaa-Pro dipeptidase from Shewanella frigidimarina (strain NCIMB 400).